Reading from the N-terminus, the 233-residue chain is MVVDAKEVEMINTLVFETLGNPEKEREFKLKSLKRWGFDLIFGKVDGKETYFTVELDERKAGDKFSKDGKEYEVIEVLQELPKNTELYAHIEMEMGKAYIVCQLRDEDGKNTEVLRVPAATLLLAFLKKNKLANIIKAIKNVGISLELSMQNGVGGKPLSYEELPNVARRFIRSARKVEKETGFGRLSFAYYGETKDGEPRYRFSWLLPTIALFDLDIAKKVEQTLGILKVSE.

This sequence belongs to the UPF0128 family.

The chain is UPF0128 protein MJ1463 from Methanocaldococcus jannaschii (strain ATCC 43067 / DSM 2661 / JAL-1 / JCM 10045 / NBRC 100440) (Methanococcus jannaschii).